The chain runs to 255 residues: NAD kinase (255 aa).

Catalysis depends on Asp44, which acts as the Proton acceptor. NAD(+) is bound by residues 44-45 (DG), His49, 114-115 (NE), Asp144, Ala152, 155-160 (SAYNLS), and Gln216.

This sequence belongs to the NAD kinase family. Requires a divalent metal cation as cofactor.

The protein resides in the cytoplasm. The enzyme catalyses NAD(+) + ATP = ADP + NADP(+) + H(+). Functionally, involved in the regulation of the intracellular balance of NAD and NADP, and is a key enzyme in the biosynthesis of NADP. Catalyzes specifically the phosphorylation on 2'-hydroxyl of the adenosine moiety of NAD to yield NADP. The protein is NAD kinase of Rickettsia conorii (strain ATCC VR-613 / Malish 7).